The following is a 389-amino-acid chain: Chalcone synthase 3 (389 aa).

Residue Cys164 is part of the active site.

The protein belongs to the thiolase-like superfamily. Chalcone/stilbene synthases family.

It carries out the reaction (E)-4-coumaroyl-CoA + 3 malonyl-CoA + 3 H(+) = 2',4,4',6'-tetrahydroxychalcone + 3 CO2 + 4 CoA. It functions in the pathway secondary metabolite biosynthesis; flavonoid biosynthesis. The primary product of this enzyme is 4,2',4',6'-tetrahydroxychalcone (also termed naringenin-chalcone or chalcone) which can under specific conditions spontaneously isomerize into naringenin. This Pisum sativum (Garden pea) protein is Chalcone synthase 3 (CHS3).